Here is a 55-residue protein sequence, read N- to C-terminus: Locustin (55 aa).

Intrachain disulfides connect Cys5–Cys40, Cys7–Cys36, Cys10–Cys32, and Cys17–Cys54.

As to quaternary structure, monomer. In terms of tissue distribution, stored in hemocyte granules and secreted into the hemolymph.

It is found in the secreted. Functionally, has antibacterial activity against Gram-positive bacterium M.luteus. This Locusta migratoria (Migratory locust) protein is Locustin.